The chain runs to 422 residues: 5'-deoxyadenosine deaminase (422 aa).

The Zn(2+) site is built by His-57 and His-59. Positions 86 and 178 each coordinate substrate. His-205 contacts Zn(2+). Residues Glu-208 and Asp-294 each contribute to the substrate site. Residue Asp-294 participates in Zn(2+) binding.

It belongs to the metallo-dependent hydrolases superfamily. MTA/SAH deaminase family. As to quaternary structure, homotetramer. The cofactor is Zn(2+).

The catalysed reaction is 5'-deoxyadenosine + H2O + H(+) = 5'-deoxyinosine + NH4(+). It catalyses the reaction S-adenosyl-L-homocysteine + H2O + H(+) = S-inosyl-L-homocysteine + NH4(+). It carries out the reaction S-methyl-5'-thioadenosine + H2O + H(+) = S-methyl-5'-thioinosine + NH4(+). The enzyme catalyses adenosine + H2O + H(+) = inosine + NH4(+). It participates in amino-acid biosynthesis; S-adenosyl-L-methionine biosynthesis. Its function is as follows. Catalyzes the deamination of three SAM-derived enzymatic products, namely 5'-deoxyadenosine, S-adenosyl-L-homocysteine, and 5'-methylthioadenosine, to produce the inosine analogs. Can also deaminate adenosine. The preferred substrate for this enzyme is 5'-deoxyadenosine, but all these substrates are efficiently deaminated. Likely functions in a S-adenosyl-L-methionine (SAM) recycling pathway from S-adenosyl-L-homocysteine (SAH) produced from SAM-dependent methylation reactions. May also be involved in the recycling of 5'-deoxyadenosine, whereupon the 5'-deoxyribose moiety of 5'-deoxyinosine is further metabolized to deoxyhexoses used for the biosynthesis of aromatic amino acids in methanogens. The polypeptide is 5'-deoxyadenosine deaminase (Methanococcus maripaludis (strain C7 / ATCC BAA-1331)).